A 387-amino-acid polypeptide reads, in one-letter code: EARP-interacting protein homolog (387 aa).

WD repeat units lie at residues 132–172 (TAHG…TKSV), 182–222 (KGQL…QIYC), 226–266 (AHGQ…EPVK), and 270–310 (EHSH…SEPF). The segment at 311–339 (GHLVDDEDLSDQEDNPQEEKTKEPLQDSI) is disordered. Residues 315–326 (DDEDLSDQEDNP) are compositionally biased toward acidic residues. Residues 345–385 (EHEDSVYAVEWSSADPWLFASLSYDGRLVINRVPRALKYNI) form a WD 5 repeat.

It belongs to the WD repeat EIPR1 family.

It is found in the golgi apparatus. It localises to the trans-Golgi network. May act as a component of endosomal retrieval machinery that is involved in protein transport from early endosomes to either recycling endosomes or the trans-Golgi network. The protein is EARP-interacting protein homolog of Xenopus laevis (African clawed frog).